Consider the following 322-residue polypeptide: Quinolinate synthase (322 aa).

Iminosuccinate contacts are provided by histidine 37 and serine 54. Cysteine 99 is a binding site for [4Fe-4S] cluster. Iminosuccinate-binding positions include tyrosine 125–asparagine 127 and serine 142. Cysteine 185 lines the [4Fe-4S] cluster pocket. Iminosuccinate is bound by residues histidine 211–glutamate 213 and threonine 228. Cysteine 278 contributes to the [4Fe-4S] cluster binding site.

Belongs to the quinolinate synthase family. Type 2 subfamily. [4Fe-4S] cluster is required as a cofactor.

It is found in the cytoplasm. The catalysed reaction is iminosuccinate + dihydroxyacetone phosphate = quinolinate + phosphate + 2 H2O + H(+). The protein operates within cofactor biosynthesis; NAD(+) biosynthesis; quinolinate from iminoaspartate: step 1/1. Functionally, catalyzes the condensation of iminoaspartate with dihydroxyacetone phosphate to form quinolinate. This is Quinolinate synthase from Chlorobaculum parvum (strain DSM 263 / NCIMB 8327) (Chlorobium vibrioforme subsp. thiosulfatophilum).